A 383-amino-acid polypeptide reads, in one-letter code: Galactokinase (383 aa).

34-37 lines the substrate pocket; it reads EHTD. ATP is bound at residue 124–130; it reads GAGLSSS. Residues S130 and E162 each contribute to the Mg(2+) site. The Proton acceptor role is filled by D174. Residue Y223 participates in substrate binding.

Belongs to the GHMP kinase family. GalK subfamily.

It localises to the cytoplasm. It carries out the reaction alpha-D-galactose + ATP = alpha-D-galactose 1-phosphate + ADP + H(+). Its pathway is carbohydrate metabolism; galactose metabolism. In terms of biological role, catalyzes the transfer of the gamma-phosphate of ATP to D-galactose to form alpha-D-galactose-1-phosphate (Gal-1-P). This chain is Galactokinase, found in Yersinia pseudotuberculosis serotype O:1b (strain IP 31758).